Reading from the N-terminus, the 862-residue chain is Cell surface glycoprotein (862 aa).

Residues 1-34 (MTDTQQKIKAVLLTVLMVTSVFAATIAFSGAAAA) form the signal peptide. Disordered regions lie at residues 35 to 60 (SERG…SAGN), 101 to 126 (ILLE…EGTE), and 200 to 220 (VNTN…DRDD). A compositionally biased stretch (polar residues) spans 43-57 (YTTGPTDGNQDNVDS). The segment covering 206–220 (NDDHPNPAADGDRDD) has biased composition (basic and acidic residues). Asparagine 442, asparagine 520, asparagine 550, asparagine 702, and asparagine 761 each carry an N-linked (GlcNAc...) asparagine glycan. A disordered region spans residues 752 to 838 (LSDENVEPGN…TEEATTEATG (87 aa)). Positions 784–801 (SLEEEQPATDTPEPDTDT) are enriched in acidic residues. Residues 802–815 (PEPATDTPEPATDT) are compositionally biased toward low complexity. Residues 816 to 833 (PEPDTDTPEPDTETEEAT) show a composition bias toward acidic residues. A helical membrane pass occupies residues 838 to 858 (GPGFTAAIALIALVAAALLAV). The PGF sorting signal motif lies at 839 to 841 (PGF).

It belongs to the halobacterial S-layer protein family. Post-translationally, glycosylated. Cleaved by the archaeosortase ArtA at the C-terminus, with removal of a short hydrophobic segment. In terms of processing, lipidation.

The protein localises to the secreted. It localises to the cell wall. It is found in the S-layer. The protein resides in the cell membrane. In terms of biological role, S-layer protein. The S-layer is a paracrystalline mono-layered assembly of proteins which coat the surface of the cell. The protein is Cell surface glycoprotein of Haloarcula japonica (strain ATCC 49778 / DSM 6131 / JCM 7785 / NBRC 101032 / NCIMB 13157 / TR-1).